The chain runs to 96 residues: UPF0235 protein Sputw3181_1321 (96 aa).

Belongs to the UPF0235 family.

This Shewanella sp. (strain W3-18-1) protein is UPF0235 protein Sputw3181_1321.